The sequence spans 392 residues: Lipid-A-disaccharide synthase (392 aa).

It belongs to the LpxB family.

It catalyses the reaction a lipid X + a UDP-2-N,3-O-bis[(3R)-3-hydroxyacyl]-alpha-D-glucosamine = a lipid A disaccharide + UDP + H(+). It participates in bacterial outer membrane biogenesis; LPS lipid A biosynthesis. In terms of biological role, condensation of UDP-2,3-diacylglucosamine and 2,3-diacylglucosamine-1-phosphate to form lipid A disaccharide, a precursor of lipid A, a phosphorylated glycolipid that anchors the lipopolysaccharide to the outer membrane of the cell. In Prochlorococcus marinus (strain MIT 9313), this protein is Lipid-A-disaccharide synthase.